We begin with the raw amino-acid sequence, 391 residues long: 3-ketoacyl-CoA thiolase (391 aa).

Cys95 functions as the Acyl-thioester intermediate in the catalytic mechanism. Active-site proton acceptor residues include His347 and Cys377.

This sequence belongs to the thiolase-like superfamily. Thiolase family. As to quaternary structure, heterotetramer of two alpha chains (FadB) and two beta chains (FadA).

Its subcellular location is the cytoplasm. The catalysed reaction is an acyl-CoA + acetyl-CoA = a 3-oxoacyl-CoA + CoA. It participates in lipid metabolism; fatty acid beta-oxidation. Functionally, catalyzes the final step of fatty acid oxidation in which acetyl-CoA is released and the CoA ester of a fatty acid two carbons shorter is formed. The polypeptide is 3-ketoacyl-CoA thiolase (Stutzerimonas stutzeri (strain A1501) (Pseudomonas stutzeri)).